Reading from the N-terminus, the 757-residue chain is Transcription regulator rua1 (757 aa).

5 disordered regions span residues 122–169 (SSGS…LPVS), 181–218 (NHQV…SNQD), 237–295 (RNTG…NGYT), 372–393 (SADC…PYPL), and 422–582 (MELQ…IGNA). Low complexity predominate over residues 125-165 (SATKSEPSTCSSSTDFSMSSTADASTAPQHSSSGDSSMSSG). 2 stretches are compositionally biased toward polar residues: residues 181–190 (NHQVTTQDAS) and 200–218 (QPPS…SNQD). Over residues 240-249 (GHRQHNRHQK) the composition is skewed to basic residues. Residues 253-277 (LPQGQSCTNSGSSSRQVTRPNSPNH) are compositionally biased toward polar residues. Residues 379-393 (PRPPSNSPEPHPYPL) are compositionally biased toward pro residues. Residues 428–437 (PARSNSTFGR) show a composition bias toward polar residues. Positions 439-453 (SQRHHQPPPSHRQRS) are enriched in basic residues. Low complexity-rich tracts occupy residues 454-465 (RTSASSISNTNA), 494-510 (ASQS…ATDA), and 543-582 (TSSS…IGNA). The C2H2-type 1 degenerate zinc-finger motif lies at 661 to 692 (REGWCSLCPQGEWYSMKRSQYLYHMQFDHGIS). A C2H2-type 2; degenerate zinc finger spans residues 717-750 (GLCHHCNKWIPICFGPQRKRDFKAWFKHARKCHR).

The protein resides in the nucleus. Transcription factor; part of the gene cluster that mediates the biosynthesis of the glycolipid biosurfactant ustilagic acid (UA). UA is a secreted cellobiose glycolipid that is toxic for many microorganisms and confers biocontrol activity to U.maydis. Recognizes and binds to the specific 5'-T/G-G/T-C-G-C-A-T-A/T-C/T-C/T-G/A-3' upstream activating sequence found in all promoters of the UA biosynthesis genes. The protein is Transcription regulator rua1 of Mycosarcoma maydis (Corn smut fungus).